Consider the following 121-residue polypeptide: Probable K(+)/H(+) antiporter subunit G (121 aa).

3 helical membrane-spanning segments follow: residues 10–32, 45–67, and 72–94; these read WAAL…GSLG, APTI…CFAV, and WVFH…LMLL.

It belongs to the CPA3 antiporters (TC 2.A.63) subunit G family. May form a hetero-oligomeric complex that consists of six subunits: PhaAB, PhaC, PhaD, PhaE, PhaF and PhaG.

Its subcellular location is the cell membrane. Functionally, part of a K(+) efflux system which is required for the adaptation of R.meliloti to alkaline pH as well as for the infection process during symbiotic nodule development. The polypeptide is Probable K(+)/H(+) antiporter subunit G (phaG) (Rhizobium meliloti (strain 1021) (Ensifer meliloti)).